The sequence spans 417 residues: Carboxypeptidase B (417 aa).

The first 16 residues, 1–16, serve as a signal peptide directing secretion; that stretch reads MLAFLILVTVTLASAH. Positions 17 to 110 are cleaved as a propeptide — activation peptide; the sequence is HSGEHFEGDK…LEAQFDSRVR (94 aa). One can recognise a Peptidase M14 domain in the interval 118 to 412; it reads KYNNWETIEA…LAIKYVTSYV (295 aa). Cys173 and Cys186 are oxidised to a cystine. The Zn(2+) site is built by His176 and Glu179. Residues 176-179, Arg234, and 251-252 contribute to the substrate site; these read HARE and NR. 2 disulfides stabilise this stretch: Cys245–Cys268 and Cys259–Cys273. His304 contacts Zn(2+). Residues 305–306 and Tyr356 contribute to the substrate site; that span reads SY. Glu378 functions as the Proton donor/acceptor in the catalytic mechanism.

The protein belongs to the peptidase M14 family. The cofactor is Zn(2+).

The protein localises to the secreted. It localises to the zymogen granule lumen. The catalysed reaction is Preferential release of a C-terminal lysine or arginine amino acid.. The polypeptide is Carboxypeptidase B (CPB1) (Bos taurus (Bovine)).